Here is a 787-residue protein sequence, read N- to C-terminus: Formate acetyltransferase (787 aa).

Residues 8 to 629 (NIFEQAWDGF…GNSPVHKGVF (622 aa)) enclose the PFL domain. Cysteine 416 (S-acetylcysteine intermediate) is an active-site residue. The Cysteine radical intermediate role is filled by cysteine 417. Residues 645–774 (SPGANPSNKA…LTERVFHEVL (130 aa)) form the Glycine radical domain. Glycine 749 carries the glycine radical modification.

It belongs to the glycyl radical enzyme (GRE) family. PFL subfamily. As to quaternary structure, homodimer.

The protein localises to the cytoplasm. It carries out the reaction formate + acetyl-CoA = pyruvate + CoA. It participates in fermentation; pyruvate fermentation; formate from pyruvate: step 1/1. The protein is Formate acetyltransferase (pfl) of Lactococcus lactis subsp. lactis (strain IL1403) (Streptococcus lactis).